The chain runs to 69 residues: Purkinje cell protein 4-like protein 1 (69 aa).

Residues 1-15 (MSELNTKTSPATNQA) show a composition bias toward polar residues. A disordered region spans residues 1–47 (MSELNTKTSPATNQAPGPEEKGKAGSAKKTEDEEEEIDIDLTAPETE). Thr-8 carries the phosphothreonine modification. Basic and acidic residues predominate over residues 18 to 31 (PEEKGKAGSAKKTE). Positions 46–69 (TEKAALAIQGKFRRFQKRKKDPSS) constitute an IQ domain.

The protein belongs to the PCP4 family.

This chain is Purkinje cell protein 4-like protein 1 (PCP4L1), found in Bos taurus (Bovine).